The primary structure comprises 77 residues: Integrin beta-2 (77 aa).

Cysteines 36 and 43 form a disulfide. N-linked (GlcNAc...) asparagine glycosylation is present at N54.

This sequence belongs to the integrin beta chain family. In terms of assembly, dimer of an alpha and beta subunit.

It localises to the membrane. Its function is as follows. Integrins are a large family of cell surface glycoproteins that mediate cell to cell and cell to matrix adhesion. This Xenopus laevis (African clawed frog) protein is Integrin beta-2 (itgb2).